The primary structure comprises 87 residues: DNA-directed RNA polymerase subunit omega (87 aa).

This sequence belongs to the RNA polymerase subunit omega family. As to quaternary structure, the RNAP catalytic core consists of 2 alpha, 1 beta, 1 beta' and 1 omega subunit. When a sigma factor is associated with the core the holoenzyme is formed, which can initiate transcription.

It catalyses the reaction RNA(n) + a ribonucleoside 5'-triphosphate = RNA(n+1) + diphosphate. Its function is as follows. Promotes RNA polymerase assembly. Latches the N- and C-terminal regions of the beta' subunit thereby facilitating its interaction with the beta and alpha subunits. In Pseudomonas fluorescens (strain ATCC BAA-477 / NRRL B-23932 / Pf-5), this protein is DNA-directed RNA polymerase subunit omega.